We begin with the raw amino-acid sequence, 83 residues long: Delta-conotoxin-like Ac6.1 (83 aa).

A signal peptide spans 1-22 (MKLTCVVIVAVLFLTAWTFVMA). Residues 23 to 51 (DDSRYGLKDLFPKARHEMKNPEASKLNKR) constitute a propeptide that is removed on maturation. 3 disulfide bridges follow: cysteine 54–cysteine 69, cysteine 61–cysteine 73, and cysteine 68–cysteine 78. 4-hydroxyproline is present on residues proline 57 and proline 65.

It belongs to the conotoxin O1 superfamily. In terms of tissue distribution, expressed by the venom duct.

It is found in the secreted. Delta-conotoxins bind to site 6 of voltage-gated sodium channels (Nav) and inhibit the inactivation process. The chain is Delta-conotoxin-like Ac6.1 from Conus achatinus (Little frog cone).